A 658-amino-acid polypeptide reads, in one-letter code: Pentatricopeptide repeat-containing protein 7, mitochondrial (658 aa).

Residues 1–29 (MRNCVSPLLFAWTKHLRLREFKIPFPNRL) constitute a mitochondrion transit peptide. PPR repeat units lie at residues 130–164 (VKKR…TPIW) and 220–254 (LYVE…SESL).

It localises to the mitochondrion. Functionally, mitochondrial RNA-binding protein required for the stability of the atp6 mRNA. This chain is Pentatricopeptide repeat-containing protein 7, mitochondrial (ppr7), found in Schizosaccharomyces pombe (strain 972 / ATCC 24843) (Fission yeast).